Reading from the N-terminus, the 351-residue chain is Bifunctional UDP-glucose 4-epimerase and UDP-xylose 4-epimerase 3 (351 aa).

8–39 is a binding site for NAD(+); that stretch reads NILVTGGAGFIGTHTVVQLLNQGFKVTIIDNL. Serine 134 is a binding site for substrate. Tyrosine 158 acts as the Proton acceptor in catalysis.

It belongs to the NAD(P)-dependent epimerase/dehydratase family. In terms of assembly, homodimer. Heterodimer. It depends on NAD(+) as a cofactor. Ubiquitous.

The enzyme catalyses UDP-alpha-D-glucose = UDP-alpha-D-galactose. It carries out the reaction UDP-beta-L-arabinopyranose = UDP-alpha-D-xylose. Its pathway is carbohydrate metabolism; galactose metabolism. It functions in the pathway nucleotide-sugar biosynthesis; UDP-L-arabinose biosynthesis; UDP-L-arabinose from UDP-alpha-D-xylose: step 1/1. It participates in cell wall biogenesis; cell wall polysaccharide biosynthesis. Its activity is regulated as follows. Strongly inhibited by UDP. Its function is as follows. Catalyzes the interconversion between UDP-glucose and UDP-galactose and the interconversion between UDP-arabinose and UDP-xylose. Cooperates with UGE2 in pollen development. May preferentially act in the UDP-galactose to UDP-glucose direction, therefore displaying a role in carbohydrate catabolism. The chain is Bifunctional UDP-glucose 4-epimerase and UDP-xylose 4-epimerase 3 (UGE3) from Arabidopsis thaliana (Mouse-ear cress).